The following is a 1354-amino-acid chain: Rho-associated protein kinase 1 (1354 aa).

S2 is subject to N-acetylserine. The Protein kinase domain maps to 76-338 (YEVVKVIGRG…VEEIKRHLFF (263 aa)). ATP-binding positions include 82–90 (IGRGAFGEV) and K105. Residue D198 is the Proton acceptor of the active site. The AGC-kinase C-terminal domain occupies 341-409 (DQWAWETLRD…YSNRRYLPSA (69 aa)). The tract at residues 368 to 727 (FDDLEEDKGD…KKLKEEREAR (360 aa)) is interaction with FHOD1. Positions 422 to 692 (KSLQESLQKT…RLEQEVNEHK (271 aa)) form a coiled coil. In terms of domain architecture, REM-1 spans 479–556 (SAVSQIEKEK…LEEANDLLRT (78 aa)). Positions 707–946 (EAKSVAMCEM…TVSRLEETNS (240 aa)) are SHROOM3 binding. The region spanning 949 to 1015 (TKDIEMLRKE…LAEIMNRKDF (67 aa)) is the RhoBD domain. An RHOA binding region spans residues 998–1010 (LKTQAVNKLAEIM). A coiled-coil region spans residues 1011–1102 (NRKDFKIDRK…KLLDLSDSTS (92 aa)). S1105 and S1108 each carry phosphoserine. An auto-inhibitory region spans residues 1115–1354 (NLPESRIEGW…VVKNTSGKTS (240 aa)). Positions 1118-1317 (ESRIEGWLSV…WVTHLVKKIP (200 aa)) constitute a PH domain. Residues 1228 to 1283 (GHEFIPTLYHFPANCEACAKPLWHVFKPPPALECRRCHVKCHRDHLDKKEDLISPC) form a Phorbol-ester/DAG-type zinc finger. S1328 is modified (phosphoserine). A disordered region spans residues 1333-1354 (STRSTANQSFRKVVKNTSGKTS).

Belongs to the protein kinase superfamily. AGC Ser/Thr protein kinase family. As to quaternary structure, homodimer. Interacts with RHOA (activated by GTP), RHOB, RHOC, GEM, MYLC2B, RHOE, PPP1R12A, LIMK1, LIMK2, TSG101, CHORDC1, DAPK3, PFN1 and JIP3. Interacts with FHOD1 in a Src-dependent manner. Interacts with PTEN. Interacts with ITGB1BP1 (via N-terminus and PTB domain). Interacts with SHROOM3. The cofactor is Mg(2+). In terms of processing, autophosphorylated on serine and threonine residues. Post-translationally, cleaved by caspase-3 during apoptosis. This leads to constitutive activation of the kinase and membrane blebbing. Highly expressed in brain, heart, lung, liver, stomach, spleen, kidney, testis, muscle, embryo and placenta.

It localises to the cytoplasm. The protein resides in the cytoskeleton. The protein localises to the microtubule organizing center. Its subcellular location is the centrosome. It is found in the centriole. It localises to the golgi apparatus membrane. The protein resides in the cell projection. The protein localises to the bleb. Its subcellular location is the cell membrane. It is found in the lamellipodium. It localises to the ruffle. The enzyme catalyses L-seryl-[protein] + ATP = O-phospho-L-seryl-[protein] + ADP + H(+). The catalysed reaction is L-threonyl-[protein] + ATP = O-phospho-L-threonyl-[protein] + ADP + H(+). Activated by RHOA binding. Inhibited by Y-27632. Its function is as follows. Protein kinase which is a key regulator of the actin cytoskeleton and cell polarity. Involved in regulation of smooth muscle contraction, actin cytoskeleton organization, stress fiber and focal adhesion formation, neurite retraction, cell adhesion and motility via phosphorylation of DAPK3, GFAP, LIMK1, LIMK2, MYL9/MLC2, TPPP, PFN1 and PPP1R12A. Phosphorylates FHOD1 and acts synergistically with it to promote SRC-dependent non-apoptotic plasma membrane blebbing. Phosphorylates JIP3 and regulates the recruitment of JNK to JIP3 upon UVB-induced stress. Acts as a suppressor of inflammatory cell migration by regulating PTEN phosphorylation and stability. Acts as a negative regulator of VEGF-induced angiogenic endothelial cell activation. Required for centrosome positioning and centrosome-dependent exit from mitosis. Plays a role in terminal erythroid differentiation. Inhibits podocyte motility via regulation of actin cytoskeletal dynamics and phosphorylation of CFL1. Promotes keratinocyte terminal differentiation. Involved in osteoblast compaction through the fibronectin fibrillogenesis cell-mediated matrix assembly process, essential for osteoblast mineralization. May regulate closure of the eyelids and ventral body wall by inducing the assembly of actomyosin bundles. This Mus musculus (Mouse) protein is Rho-associated protein kinase 1 (Rock1).